Consider the following 414-residue polypeptide: LTYYTPEYKTKDTDILGAFRMTPQPGVPAEEAGAAVAAESSTGTWTTVWTDGLTSLDRYKGRCYDIEPVAGEENQYIVYVAYPLDLFEEGSVTNMFTSIVGNVFGFKALRALRLEDLRIPPAYSKTFQGPPHGIQVERDKLNKYGRPLLGCTIKPKLGLSAKNYGRAVYECLRGGLDFTKDDENVNSQPFMRWRDRFLFVAEALFKSQAETGEIKGHYLNATAGHCEEMMKRAIFARELGAPIVMHDYLTGGFTANTSLAHYCRDNGLLLHIHRAMHAVISRQKIHGMHFRVLAKGLRMSGGDHIHGGTVVGKLEGEREVTLGFVDLLRDDFIEKDRNRGIYFTQDWVSMPGVIPVASGGIHVWHMPALTEILGDESVPQFGGGTLGHPWGIAPGSVANPVAVETSVQLRNEGR.

Substrate contacts are provided by asparagine 102 and threonine 152. Residue lysine 154 is the Proton acceptor of the active site. Substrate is bound at residue lysine 156. Residues lysine 180, aspartate 182, and glutamate 183 each contribute to the Mg(2+) site. The residue at position 180 (lysine 180) is an N6-carboxylysine. Histidine 273 acts as the Proton acceptor in catalysis. Residues arginine 274, histidine 306, and serine 358 each coordinate substrate.

This sequence belongs to the RuBisCO large chain family. Type I subfamily. In terms of assembly, heterohexadecamer of 8 large chains and 8 small chains; disulfide-linked. The disulfide link is formed within the large subunit homodimers. It depends on Mg(2+) as a cofactor. The disulfide bond which can form in the large chain dimeric partners within the hexadecamer appears to be associated with oxidative stress and protein turnover.

It is found in the plastid. It localises to the chloroplast. The enzyme catalyses 2 (2R)-3-phosphoglycerate + 2 H(+) = D-ribulose 1,5-bisphosphate + CO2 + H2O. It carries out the reaction D-ribulose 1,5-bisphosphate + O2 = 2-phosphoglycolate + (2R)-3-phosphoglycerate + 2 H(+). Its function is as follows. RuBisCO catalyzes two reactions: the carboxylation of D-ribulose 1,5-bisphosphate, the primary event in carbon dioxide fixation, as well as the oxidative fragmentation of the pentose substrate in the photorespiration process. Both reactions occur simultaneously and in competition at the same active site. The sequence is that of Ribulose bisphosphate carboxylase large chain (rbcL) from Antrophyum reticulatum (Ox-tongue fern).